A 452-amino-acid polypeptide reads, in one-letter code: Protein phosphatase 1F (452 aa).

The region spanning 153 to 410 (LVSIHAIRNT…DNITVMVVFL (258 aa)) is the PPM-type phosphatase domain. Mn(2+) contacts are provided by aspartate 195, glycine 196, aspartate 357, and aspartate 401. At serine 452 the chain carries Phosphoserine.

Belongs to the PP2C family. As to quaternary structure, associates with FEM1B. The cofactor is Mg(2+). Mn(2+) serves as cofactor. In terms of tissue distribution, expressed in the liver.

It catalyses the reaction O-phospho-L-seryl-[protein] + H2O = L-seryl-[protein] + phosphate. The catalysed reaction is O-phospho-L-threonyl-[protein] + H2O = L-threonyl-[protein] + phosphate. Dephosphorylates and concomitantly deactivates CaM-kinase II activated upon autophosphorylation, and CaM-kinases IV and I activated upon phosphorylation by CaM-kinase kinase. Promotes apoptosis. The sequence is that of Protein phosphatase 1F (Ppm1f) from Mus musculus (Mouse).